The chain runs to 590 residues: UvrABC system protein C (590 aa).

Residues glutamate 11 to valine 85 form the GIY-YIG domain. In terms of domain architecture, UVR spans aspartate 194–phenylalanine 229.

Belongs to the UvrC family. In terms of assembly, interacts with UvrB in an incision complex.

It is found in the cytoplasm. Its function is as follows. The UvrABC repair system catalyzes the recognition and processing of DNA lesions. UvrC both incises the 5' and 3' sides of the lesion. The N-terminal half is responsible for the 3' incision and the C-terminal half is responsible for the 5' incision. The chain is UvrABC system protein C from Thermus thermophilus (strain ATCC 27634 / DSM 579 / HB8).